The sequence spans 970 residues: MSKVSGANETLQGALAPLSHMGGGGDATLLKDEGQVELPRGPGVLNVQVLPEEGHAHLQDLEGYKSMDPRQSESASTDVSEMLQHTASLDDPIQFTRVSTSSVTSNSSSDPRESGDTQETGSRRGCSTEEQAPAGAERVSGQDQDSWDVEEVVAEPRSGIDVTPVGDVTNSTIRASGRSAESTSHYLDEYSDTRYSSSSPSSGSRKLSTTIITPEKNVVAQALHCYADNYESPLNDLMSSGDERSSSVRETSFENASSDTNANLNGGRASTGESMRSPPPATGLPNGFVHTQASAPALPVLPAKSPFRAVQSPFSGTRKSRNSANLAELSLPRTSTSSASSMEQRKSRGGRMKVVLSSFVQNIRRNSQGEKRRSGTAMKISTPYNATHVHHVGVDSRTGEYTGLPEEWERLLASSGISKKEQQQHPQAVMDIVKFYQDVTGTSGEDKVFKTFNVSSTNACELSSSPSFKTPSLSSITRFEGSHEAYNSAYHSPMLQSPMGFHDPQHDEKFIPSRPAPRPPGGAAPKTDFTSPLAYDSQSATATPKNQRFSNQSSGFFSLARKATLNKNKQQLPPIPSAAAASAPITQPGSTANIPYIKPAENPVSAPSKSIPPSLPAVPTPPPPIEKDPPLRDLEREREREHSSAKQGQLALERKREEKRRRNQKLQAKLAEICSPGDPSKIYRNLVKIGQGASGGVYTAYEIGTNASVAIKQMNLEKQPKKELIINEILVMKGSRHNNIVNFIDSYLLKGDLWVIMEYMEGGSLTDVVTHCILTEGQIAAVSRETLRGLHFLHSKGVIHRDIKSDNILLSMDGNIKLTDFGFCAQINETNLKRTTMVGTPYWMAPEVVSRKEYGPKVDIWSLGIMIIEMIEGEPPYLNETPLRALYLIATNGTPKLKDADSLSPVLKRFLSWCLQVSPNDRATAMELLYDKFIVEVAEANASLAPLVKLARMKKLAEKMDADSDDNRTD.

Polar residues predominate over residues M1–L11. Disordered regions lie at residues M1–P42, T86–H185, D236–L284, and Q311–R351. Residues V98–S109 are compositionally biased toward low complexity. Polar residues-rich tracts occupy residues V168–H185, V248–L264, and S312–N325. The CRIB domain occupies I380–G393. Disordered regions lie at residues M499–N551 and A592–N663. The span at D536–N551 shows a compositional bias: polar residues. Over residues P613–P624 the composition is skewed to pro residues. Residues I625–S644 show a composition bias toward basic and acidic residues. The Protein kinase domain occupies Y683 to I934. ATP-binding positions include I689 to V697 and K712. D802 (proton acceptor) is an active-site residue.

Belongs to the protein kinase superfamily. STE Ser/Thr protein kinase family. STE20 subfamily.

It localises to the cytoplasm. The protein resides in the nucleus. The enzyme catalyses L-seryl-[protein] + ATP = O-phospho-L-seryl-[protein] + ADP + H(+). It catalyses the reaction L-threonyl-[protein] + ATP = O-phospho-L-threonyl-[protein] + ADP + H(+). Functionally, MAP4K component of the MAPK pathway required for the mating pheromone response and the regulation of cell polarity and cell cycle. Phosphorylates histone H2B to form H2BS10ph. This is Serine/threonine-protein kinase STE20 (STE20) from Eremothecium gossypii (strain ATCC 10895 / CBS 109.51 / FGSC 9923 / NRRL Y-1056) (Yeast).